The chain runs to 71 residues: Putative defensin-like protein 303 (71 aa).

The N-terminal stretch at 1 to 25 (MKSNKATFFLGLLLVYAFCIMLIES) is a signal peptide. Disulfide bonds link Cys-27–Cys-45, Cys-33–Cys-50, and Cys-39–Cys-52.

Belongs to the DEFL family.

It localises to the secreted. This chain is Putative defensin-like protein 303, found in Arabidopsis thaliana (Mouse-ear cress).